We begin with the raw amino-acid sequence, 372 residues long: Alanine dehydrogenase 1 (372 aa).

Residue histidine 94 is part of the active site. An NAD(+)-binding site is contributed by 170-200 (TYVIFGGGVAATNAANVALGLNAKVIIIELN).

This sequence belongs to the AlaDH/PNT family.

The enzyme catalyses L-alanine + NAD(+) + H2O = pyruvate + NH4(+) + NADH + H(+). Its pathway is amino-acid degradation; L-alanine degradation via dehydrogenase pathway; NH(3) and pyruvate from L-alanine: step 1/1. Functionally, may play a role in cell wall synthesis as L-alanine is an important constituent of the peptidoglycan layer. The sequence is that of Alanine dehydrogenase 1 (ald1) from Staphylococcus aureus (strain MRSA252).